An 84-amino-acid polypeptide reads, in one-letter code: Inactive transposase YbfQ (84 aa).

The protein is Inactive transposase YbfQ (ybfQ) of Escherichia coli (strain K12).